We begin with the raw amino-acid sequence, 177 residues long: Probable chemoreceptor glutamine deamidase CheD (177 aa).

Belongs to the CheD family.

It carries out the reaction L-glutaminyl-[protein] + H2O = L-glutamyl-[protein] + NH4(+). In terms of biological role, probably deamidates glutamine residues to glutamate on methyl-accepting chemotaxis receptors (MCPs), playing an important role in chemotaxis. The sequence is that of Probable chemoreceptor glutamine deamidase CheD from Pseudomonas fluorescens (strain SBW25).